The following is a 474-amino-acid chain: tRNA modification GTPase MnmE (474 aa).

The (6S)-5-formyl-5,6,7,8-tetrahydrofolate site is built by arginine 25, glutamate 82, and lysine 123. Residues 219–386 (GIKVVIAGKP…LKKHLYDSAM (168 aa)) enclose the TrmE-type G domain. Asparagine 229 is a binding site for K(+). GTP-binding positions include 229-234 (NAGKSS), 248-254 (SNISGTT), and 273-276 (DTAG). Serine 233 provides a ligand contact to Mg(2+). K(+) is bound by residues serine 248, isoleucine 250, and threonine 253. A Mg(2+)-binding site is contributed by threonine 254. Lysine 474 is a binding site for (6S)-5-formyl-5,6,7,8-tetrahydrofolate.

It belongs to the TRAFAC class TrmE-Era-EngA-EngB-Septin-like GTPase superfamily. TrmE GTPase family. Homodimer. Heterotetramer of two MnmE and two MnmG subunits. K(+) serves as cofactor.

Its subcellular location is the cytoplasm. Exhibits a very high intrinsic GTPase hydrolysis rate. Involved in the addition of a carboxymethylaminomethyl (cmnm) group at the wobble position (U34) of certain tRNAs, forming tRNA-cmnm(5)s(2)U34. This is tRNA modification GTPase MnmE from Blochmanniella floridana.